Consider the following 303-residue polypeptide: Vesicle-trafficking protein SEC22c (303 aa).

Residues 1 to 183 (MSVIFFACVV…EPAPNFRMEP (183 aa)) are Cytoplasmic-facing. One can recognise a Longin domain in the interval 8–119 (CVVRVRDGLP…YAFLEFDSII (112 aa)). A helical membrane pass occupies residues 184–204 (VTALGILSLILNIMCAALNLI). Residues 205–223 (RGVHLAEHSLQVAHEEIGN) lie on the Lumenal side of the membrane. The helical transmembrane segment at 224–244 (ILAFLVPFVACIFQCYLYLFY) threads the bilayer. Residues 245–248 (SPAR) are Cytoplasmic-facing. A helical membrane pass occupies residues 249 to 269 (TMKVVLMLLFICLGNMYLHGL). Residue arginine 270 is a topological domain, lumenal. A helical membrane pass occupies residues 271-291 (NLWQILFHIGVAFLSSYQILT). At 292-303 (RQLQEKQSDCGV) the chain is on the cytoplasmic side.

It belongs to the synaptobrevin family. Ubiquitously expressed.

The protein localises to the endoplasmic reticulum membrane. In terms of biological role, may be involved in vesicle transport between the ER and the Golgi complex. The protein is Vesicle-trafficking protein SEC22c (SEC22C) of Homo sapiens (Human).